The sequence spans 89 residues: MVDTILRIATRQSPLALWQAHFVQQRLEACHPGLRVELVPMVTRGXLLLDTPLAKVGGKGLFVKELELALLENRADIAVHSMKDVPVEF.

Belongs to the HMBS family. As to quaternary structure, monomer. Requires dipyrromethane as cofactor.

It catalyses the reaction 4 porphobilinogen + H2O = hydroxymethylbilane + 4 NH4(+). It participates in porphyrin-containing compound metabolism; protoporphyrin-IX biosynthesis; coproporphyrinogen-III from 5-aminolevulinate: step 2/4. In terms of biological role, tetrapolymerization of the monopyrrole PBG into the hydroxymethylbilane pre-uroporphyrinogen in several discrete steps. This chain is Porphobilinogen deaminase (hemC), found in Dickeya chrysanthemi (Pectobacterium chrysanthemi).